The primary structure comprises 498 residues: Aldehyde dehydrogenase, mitochondrial (498 aa).

The transit peptide at 1–9 (MLRATLARL) directs the protein to the mitochondrion. Residue 242-247 (GSTAVG) participates in NAD(+) binding. Glutamate 265 serves as the catalytic Proton acceptor. The active-site Nucleophile is the cysteine 299.

Belongs to the aldehyde dehydrogenase family.

It is found in the mitochondrion. It carries out the reaction an aldehyde + NAD(+) + H2O = a carboxylate + NADH + 2 H(+). It functions in the pathway alcohol metabolism; ethanol degradation; acetate from ethanol: step 2/2. Its function is as follows. Could have an RNA-binding activity in addition of its catalytic role. The polypeptide is Aldehyde dehydrogenase, mitochondrial (ALDH2) (Leishmania tarentolae (Sauroleishmania tarentolae)).